The chain runs to 517 residues: Putative thymidine phosphorylase (517 aa).

This sequence belongs to the thymidine/pyrimidine-nucleoside phosphorylase family. Type 2 subfamily.

It catalyses the reaction thymidine + phosphate = 2-deoxy-alpha-D-ribose 1-phosphate + thymine. The sequence is that of Putative thymidine phosphorylase from Legionella pneumophila (strain Paris).